The sequence spans 415 residues: Gamma-glutamyl phosphate reductase (415 aa).

It belongs to the gamma-glutamyl phosphate reductase family.

It is found in the cytoplasm. The enzyme catalyses L-glutamate 5-semialdehyde + phosphate + NADP(+) = L-glutamyl 5-phosphate + NADPH + H(+). It participates in amino-acid biosynthesis; L-proline biosynthesis; L-glutamate 5-semialdehyde from L-glutamate: step 2/2. In terms of biological role, catalyzes the NADPH-dependent reduction of L-glutamate 5-phosphate into L-glutamate 5-semialdehyde and phosphate. The product spontaneously undergoes cyclization to form 1-pyrroline-5-carboxylate. The sequence is that of Gamma-glutamyl phosphate reductase from Pseudoalteromonas translucida (strain TAC 125).